We begin with the raw amino-acid sequence, 428 residues long: D-amino acid dehydrogenase (428 aa).

3-17 (VVILGSGVVGVASAY) serves as a coordination point for FAD.

This sequence belongs to the DadA oxidoreductase family. FAD is required as a cofactor.

The catalysed reaction is a D-alpha-amino acid + A + H2O = a 2-oxocarboxylate + AH2 + NH4(+). The protein operates within amino-acid degradation; D-alanine degradation; NH(3) and pyruvate from D-alanine: step 1/1. Its function is as follows. Oxidative deamination of D-amino acids. In Burkholderia multivorans (strain ATCC 17616 / 249), this protein is D-amino acid dehydrogenase.